We begin with the raw amino-acid sequence, 203 residues long: Xrcc4-like factor 1 (203 aa).

It belongs to the XRCC4-XLF family. XLF subfamily.

It is found in the nucleus. Functionally, involved in double-strand break repair via non-homologous end joining (NHEJ); the repair of a double-strand break in DNA in which the two broken ends are rejoined with little or no sequence complementarity. Has a role in meiosis. This is Xrcc4-like factor 1 (xlf1) from Schizosaccharomyces pombe (strain 972 / ATCC 24843) (Fission yeast).